We begin with the raw amino-acid sequence, 157 residues long: Probable succinate transporter subunit YjjB (157 aa).

Helical transmembrane passes span 8–28 (FALA…AMVF), 50–70 (MILM…SMLV), 87–107 (VFTV…TAMI), and 129–149 (FLTA…PGLW).

It belongs to the ThrE exporter (TC 2.A.79) family. As to quaternary structure, the transporter is composed of YjjB and YjjP.

The protein resides in the cell inner membrane. Its function is as follows. Involved in succinate export with YjjP. Both proteins are required for export. The polypeptide is Probable succinate transporter subunit YjjB (Escherichia coli (strain SE11)).